A 509-amino-acid chain; its full sequence is Bifunctional purine biosynthesis protein PurH (509 aa).

Positions 1–144 (MKRALISVSD…KNYAAVTVVV (144 aa)) constitute an MGS-like domain.

The protein belongs to the PurH family.

The enzyme catalyses (6R)-10-formyltetrahydrofolate + 5-amino-1-(5-phospho-beta-D-ribosyl)imidazole-4-carboxamide = 5-formamido-1-(5-phospho-D-ribosyl)imidazole-4-carboxamide + (6S)-5,6,7,8-tetrahydrofolate. It catalyses the reaction IMP + H2O = 5-formamido-1-(5-phospho-D-ribosyl)imidazole-4-carboxamide. It functions in the pathway purine metabolism; IMP biosynthesis via de novo pathway; 5-formamido-1-(5-phospho-D-ribosyl)imidazole-4-carboxamide from 5-amino-1-(5-phospho-D-ribosyl)imidazole-4-carboxamide (10-formyl THF route): step 1/1. Its pathway is purine metabolism; IMP biosynthesis via de novo pathway; IMP from 5-formamido-1-(5-phospho-D-ribosyl)imidazole-4-carboxamide: step 1/1. The protein is Bifunctional purine biosynthesis protein PurH of Listeria monocytogenes serotype 4a (strain HCC23).